Consider the following 215-residue polypeptide: Ribose-5-phosphate isomerase A (215 aa).

Substrate-binding positions include 26–29, 79–82, and 92–95; these read TGST, DGAD, and KGGG. Residue Glu-101 is the Proton acceptor of the active site. Lys-119 contributes to the substrate binding site.

The protein belongs to the ribose 5-phosphate isomerase family. In terms of assembly, homodimer.

It carries out the reaction aldehydo-D-ribose 5-phosphate = D-ribulose 5-phosphate. Its pathway is carbohydrate degradation; pentose phosphate pathway; D-ribose 5-phosphate from D-ribulose 5-phosphate (non-oxidative stage): step 1/1. Functionally, catalyzes the reversible conversion of ribose-5-phosphate to ribulose 5-phosphate. The chain is Ribose-5-phosphate isomerase A from Xanthomonas euvesicatoria pv. vesicatoria (strain 85-10) (Xanthomonas campestris pv. vesicatoria).